The following is a 526-amino-acid chain: uncharacterized protein (526 aa).

WD repeat units follow at residues 210-248 (SMEQYINSIAISPNKKYIALATTCGLIIYNLIDKTHHDT) and 452-491 (SHNSCVTSIAISSNNKMILTAGLDGLLKLWNSKTLNLIDS).

This is an uncharacterized protein from Acanthamoeba polyphaga mimivirus (APMV).